The chain runs to 122 residues: Large ribosomal subunit protein uL14 (122 aa).

Belongs to the universal ribosomal protein uL14 family. Part of the 50S ribosomal subunit. Forms a cluster with proteins L3 and L19. In the 70S ribosome, L14 and L19 interact and together make contacts with the 16S rRNA in bridges B5 and B8.

Binds to 23S rRNA. Forms part of two intersubunit bridges in the 70S ribosome. In Paramagnetospirillum magneticum (strain ATCC 700264 / AMB-1) (Magnetospirillum magneticum), this protein is Large ribosomal subunit protein uL14.